The primary structure comprises 399 residues: uncharacterized protein (399 aa).

Residues 1 to 8 (MHNLQVRR) are Cytoplasmic-facing. A helical membrane pass occupies residues 9–35 (HYAALKGFYLFAFLGTGSIIPLLSMYL). Residues 36-42 (TKEQHLS) are Extracellular-facing. Residues 43-71 (GSQVGLIMSLGPIVMIFFQPFWGMLSDYT) traverse the membrane as a helical segment. Over 72-75 (QKTK) the chain is Cytoplasmic. A helical membrane pass occupies residues 76 to 101 (GLLAVCTSITGIIGLAYIAFDSFPLF). Residues 102-105 (ILIA) are Extracellular-facing. A helical transmembrane segment spans residues 106–123 (ACFAAFQSTIIPLSDSIS). At 124-134 (LRYTQETNGNY) the chain is on the cytoplasmic side. Residues 135–157 (GGIRLFGSLGFGVAVFAMGQVTN) traverse the membrane as a helical segment. The Extracellular portion of the chain corresponds to 158-160 (QLY). The chain crosses the membrane as a helical span at residues 161-180 (PIHVIFIFGCAFLCIAAILA). The Cytoplasmic segment spans residues 181–210 (SQVPGQQKTTKVNIRKGFRELISNKTFLIF). A helical membrane pass occupies residues 211–230 (MIITFTTFAPNLANNTYFSL). The Extracellular segment spans residues 231-234 (FLDK). Residues 235–259 (SGASLSAIGILFFIGVISEIPFMRF) form a helical membrane-spanning segment. The Cytoplasmic portion of the chain corresponds to 260–269 (AQTFIDKMGL). A helical membrane pass occupies residues 270-289 (LNVIMLSGGVSLFRWALYFT). The Extracellular segment spans residues 290 to 292 (APS). The chain crosses the membrane as a helical span at residues 293–315 (LWIIYATVFLQGVAIGLFIPAAL). Residues 316 to 327 (QYVKKITPRHVE) lie on the Cytoplasmic side of the membrane. Residues 328-355 (ATALTMYAAIGNGFGNWFCTFAGGYIFD) traverse the membrane as a helical segment. Over 356 to 358 (YVS) the chain is Extracellular. A helical membrane pass occupies residues 359-379 (IFAVYLLFGILSIAGFGLTLY). Residues 380-399 (LMKAEKNKHTLHQPAVTFKP) lie on the Cytoplasmic side of the membrane.

Belongs to the major facilitator superfamily.

The protein localises to the cell membrane. This is an uncharacterized protein from Bacillus subtilis (strain 168).